The sequence spans 235 residues: Ribonuclease P protein component 3 (235 aa).

Belongs to the eukaryotic/archaeal RNase P protein component 3 family. Consists of a catalytic RNA component and at least 4-5 protein subunits.

It localises to the cytoplasm. It carries out the reaction Endonucleolytic cleavage of RNA, removing 5'-extranucleotides from tRNA precursor.. In terms of biological role, part of ribonuclease P, a protein complex that generates mature tRNA molecules by cleaving their 5'-ends. This chain is Ribonuclease P protein component 3, found in Haloarcula marismortui (strain ATCC 43049 / DSM 3752 / JCM 8966 / VKM B-1809) (Halobacterium marismortui).